The primary structure comprises 286 residues: Pyridoxal kinase PdxY (286 aa).

Substrate is bound by residues Ser-9 and 44-45; that span reads TQ. Residues Asp-111, Glu-148, and Lys-181 each contribute to the ATP site. Asp-222 is a binding site for substrate.

The protein belongs to the pyridoxine kinase family. PdxY subfamily. In terms of assembly, homodimer. Mg(2+) is required as a cofactor.

The catalysed reaction is pyridoxal + ATP = pyridoxal 5'-phosphate + ADP + H(+). It functions in the pathway cofactor metabolism; pyridoxal 5'-phosphate salvage; pyridoxal 5'-phosphate from pyridoxal: step 1/1. Functionally, pyridoxal kinase involved in the salvage pathway of pyridoxal 5'-phosphate (PLP). Catalyzes the phosphorylation of pyridoxal to PLP. This Actinobacillus succinogenes (strain ATCC 55618 / DSM 22257 / CCUG 43843 / 130Z) protein is Pyridoxal kinase PdxY.